The primary structure comprises 314 residues: Probable cell division protein WhiA (314 aa).

The H-T-H motif DNA-binding region spans S274–S308.

It belongs to the WhiA family.

Functionally, involved in cell division and chromosome segregation. The sequence is that of Probable cell division protein WhiA from Staphylococcus saprophyticus subsp. saprophyticus (strain ATCC 15305 / DSM 20229 / NCIMB 8711 / NCTC 7292 / S-41).